The chain runs to 401 residues: Propionate kinase (401 aa).

ATP contacts are provided by N11 and K18. N11 serves as a coordination point for Mg(2+). Position 86 (R86) interacts with substrate. D143 (proton donor/acceptor) is an active-site residue. Residues H175, 203–207 (HLGNG), 278–280 (DLR), and 326–330 (GIGEN) contribute to the ATP site.

This sequence belongs to the acetokinase family. TdcD subfamily. In terms of assembly, homodimer. Requires Mg(2+) as cofactor.

The catalysed reaction is propanoate + ATP = propanoyl phosphate + ADP. The protein operates within amino-acid degradation; L-threonine degradation via propanoate pathway; propanoate from L-threonine: step 4/4. In terms of biological role, catalyzes the conversion of propionyl phosphate and ADP to propionate and ATP. The polypeptide is Propionate kinase (Klebsiella pneumoniae (strain 342)).